Reading from the N-terminus, the 207-residue chain is Fibroblast growth factor 18 (207 aa).

A signal peptide spans 1 to 27; that stretch reads MYSAPSACTCLCLHFLLLCFQVQVLAA. Residue Asn-39 is glycosylated (N-linked (GlcNAc...) asparagine). A disulfide bond links Cys-109 and Cys-127. A glycan (N-linked (GlcNAc...) asparagine) is linked at Asn-137.

Belongs to the heparin-binding growth factors family. As to quaternary structure, interacts with FGFR3 and FGFR4.

It is found in the secreted. Functionally, plays an important role in the regulation of cell proliferation, cell differentiation and cell migration. Required for normal ossification and bone development. Stimulates hepatic and intestinal proliferation. This chain is Fibroblast growth factor 18 (Fgf18), found in Mus musculus (Mouse).